Here is a 224-residue protein sequence, read N- to C-terminus: Large ribosomal subunit protein uL3 (224 aa).

The segment at 132–153 (SQTKTHGTHEYQRHPGAIGQRK) is disordered.

Belongs to the universal ribosomal protein uL3 family. In terms of assembly, part of the 50S ribosomal subunit. Forms a cluster with proteins L14 and L19.

Functionally, one of the primary rRNA binding proteins, it binds directly near the 3'-end of the 23S rRNA, where it nucleates assembly of the 50S subunit. This Myxococcus xanthus (strain DK1622) protein is Large ribosomal subunit protein uL3.